Reading from the N-terminus, the 656-residue chain is Threonine--tRNA ligase (656 aa).

The region spanning 2-67 (LMSQITIILP…KDQTKVALVT (66 aa)) is the TGS domain. The catalytic stretch occupies residues 251–542 (DHRKLGKELG…YLEHTAGHLP (292 aa)). Positions 342, 393, and 519 each coordinate Zn(2+).

Belongs to the class-II aminoacyl-tRNA synthetase family. In terms of assembly, homodimer. Zn(2+) is required as a cofactor.

It localises to the cytoplasm. It catalyses the reaction tRNA(Thr) + L-threonine + ATP = L-threonyl-tRNA(Thr) + AMP + diphosphate + H(+). Functionally, catalyzes the attachment of threonine to tRNA(Thr) in a two-step reaction: L-threonine is first activated by ATP to form Thr-AMP and then transferred to the acceptor end of tRNA(Thr). Also edits incorrectly charged L-seryl-tRNA(Thr). In Bdellovibrio bacteriovorus (strain ATCC 15356 / DSM 50701 / NCIMB 9529 / HD100), this protein is Threonine--tRNA ligase.